The sequence spans 344 residues: Protein RecA (344 aa).

66-73 (GPESSGKT) serves as a coordination point for ATP.

This sequence belongs to the RecA family.

The protein resides in the cytoplasm. Functionally, can catalyze the hydrolysis of ATP in the presence of single-stranded DNA, the ATP-dependent uptake of single-stranded DNA by duplex DNA, and the ATP-dependent hybridization of homologous single-stranded DNAs. It interacts with LexA causing its activation and leading to its autocatalytic cleavage. In Methylobacillus flagellatus, this protein is Protein RecA.